Here is a 471-residue protein sequence, read N- to C-terminus: Proline--tRNA ligase 2 (471 aa).

Belongs to the class-II aminoacyl-tRNA synthetase family. ProS type 3 subfamily. Homodimer.

The protein localises to the cytoplasm. It carries out the reaction tRNA(Pro) + L-proline + ATP = L-prolyl-tRNA(Pro) + AMP + diphosphate. Its function is as follows. Catalyzes the attachment of proline to tRNA(Pro) in a two-step reaction: proline is first activated by ATP to form Pro-AMP and then transferred to the acceptor end of tRNA(Pro). The sequence is that of Proline--tRNA ligase 2 from Streptomyces avermitilis (strain ATCC 31267 / DSM 46492 / JCM 5070 / NBRC 14893 / NCIMB 12804 / NRRL 8165 / MA-4680).